Reading from the N-terminus, the 340-residue chain is UDP-3-O-(3-hydroxymyristoyl)glucosamine N-acyltransferase (340 aa).

Residue histidine 239 is the Proton acceptor of the active site.

It belongs to the transferase hexapeptide repeat family. LpxD subfamily. As to quaternary structure, homotrimer.

The enzyme catalyses a UDP-3-O-[(3R)-3-hydroxyacyl]-alpha-D-glucosamine + a (3R)-hydroxyacyl-[ACP] = a UDP-2-N,3-O-bis[(3R)-3-hydroxyacyl]-alpha-D-glucosamine + holo-[ACP] + H(+). It catalyses the reaction UDP-3-O-[(3R)-3-hydroxytetradecanoyl]-alpha-D-glucosamine + (3R)-hydroxytetradecanoyl-[ACP] = UDP-2-N,3-O-bis[(3R)-3-hydroxytetradecanoyl]-alpha-D-glucosamine + holo-[ACP] + H(+). It participates in glycolipid biosynthesis; lipid IV(A) biosynthesis; lipid IV(A) from (3R)-3-hydroxytetradecanoyl-[acyl-carrier-protein] and UDP-N-acetyl-alpha-D-glucosamine: step 3/6. Catalyzes the N-acylation of UDP-3-O-(hydroxytetradecanoyl)glucosamine using 3-hydroxytetradecanoyl-ACP as the acyl donor. Is involved in the biosynthesis of lipid A, a phosphorylated glycolipid that anchors the lipopolysaccharide to the outer membrane of the cell. This Pectobacterium atrosepticum (strain SCRI 1043 / ATCC BAA-672) (Erwinia carotovora subsp. atroseptica) protein is UDP-3-O-(3-hydroxymyristoyl)glucosamine N-acyltransferase.